Here is a 361-residue protein sequence, read N- to C-terminus: Peptide chain release factor 1 (361 aa).

At Q236 the chain carries N5-methylglutamine.

It belongs to the prokaryotic/mitochondrial release factor family. Methylated by PrmC. Methylation increases the termination efficiency of RF1.

The protein localises to the cytoplasm. In terms of biological role, peptide chain release factor 1 directs the termination of translation in response to the peptide chain termination codons UAG and UAA. The polypeptide is Peptide chain release factor 1 (Lactobacillus delbrueckii subsp. bulgaricus (strain ATCC 11842 / DSM 20081 / BCRC 10696 / JCM 1002 / NBRC 13953 / NCIMB 11778 / NCTC 12712 / WDCM 00102 / Lb 14)).